A 237-amino-acid polypeptide reads, in one-letter code: Ribonuclease PH (237 aa).

Phosphate contacts are provided by residues arginine 86 and 124-126; that span reads GTR.

The protein belongs to the RNase PH family. Homohexameric ring arranged as a trimer of dimers.

It carries out the reaction tRNA(n+1) + phosphate = tRNA(n) + a ribonucleoside 5'-diphosphate. Functionally, phosphorolytic 3'-5' exoribonuclease that plays an important role in tRNA 3'-end maturation. Removes nucleotide residues following the 3'-CCA terminus of tRNAs; can also add nucleotides to the ends of RNA molecules by using nucleoside diphosphates as substrates, but this may not be physiologically important. Probably plays a role in initiation of 16S rRNA degradation (leading to ribosome degradation) during starvation. This Methylobacterium nodulans (strain LMG 21967 / CNCM I-2342 / ORS 2060) protein is Ribonuclease PH.